The chain runs to 452 residues: Putative purine permease CPE0397 (452 aa).

12 helical membrane passes run 34 to 54 (IFAA…SLGF), 58 to 78 (VTTA…IIQA), 83 to 103 (KVGA…SPAI), 108 to 128 (VLGL…EVIL), 138 to 158 (FFPP…LLPV), 172 to 192 (YASL…LLLN), 201 to 221 (SASI…LGLV), 250 to 270 (MAFI…LKAI), 326 to 346 (AVMA…AAII), 348 to 368 (GIPN…VAAA), 383 to 403 (LLII…PDVI), and 412 to 432 (MIFS…NAVL).

The protein belongs to the nucleobase:cation symporter-2 (NCS2) (TC 2.A.40) family.

Its subcellular location is the cell membrane. The sequence is that of Putative purine permease CPE0397 (cpx) from Clostridium perfringens (strain 13 / Type A).